A 508-amino-acid chain; its full sequence is Early growth response protein 1 (508 aa).

Disordered stretches follow at residues 18–78 (PQFL…ESFS) and 136–210 (MTNP…QYPP). Residues 33-42 (NNSSSSSSSS) show a composition bias toward low complexity. A compositionally biased stretch (gly residues) spans 43-52 (SGGGGGGGSN). The segment covering 139–164 (PPTSSSSAPSPAASSSSSASQSPPLS) has biased composition (low complexity). A Glycyl lysine isopeptide (Lys-Gly) (interchain with G-Cter in SUMO2) cross-link involves residue K278. A disordered region spans residues 292–311 (SRMRKYPNRPSKTPPHERPY). 3 consecutive C2H2-type zinc fingers follow at residues 311–335 (YACP…IRIH), 341–363 (FQCR…IRTH), and 369–391 (FACD…TKIH). The interval 382–453 (DERKRHTKIH…SSTYPSPAHS (72 aa)) is disordered. Residues 386–396 (RHTKIHLRQKD) show a composition bias toward basic residues. Over residues 402–450 (SVVASSAASSLSSYPSPVATSYPSPATTSFPSPVPTSYSSPGSSTYPSP) the composition is skewed to low complexity. 7 consecutive repeat copies span residues 413-420 (SSYPSPVA), 421-428 (TSYPSPAT), 429-436 (TSFPSPVP), 437-444 (TSYSSPGS), 445-452 (STYPSPAH), 453-460 (SGFPSPSV), and 462-468 (TTYASVP). The segment at 413–468 (SSYPSPVATSYPSPATTSFPSPVPTSYSSPGSSTYPSPAHSGFPSPSVATTYASVP) is 7 X 8 AA tandem repeats of [TS](2)-[FY]-[PS]-S-P-[GSAV]-X.

It belongs to the EGR C2H2-type zinc-finger protein family. In terms of assembly, interacts with SNAI1 and SP1 upon 12-O-tetradecanoylphorbol-13-acetate (TPA) induction. In terms of tissue distribution, detected in kidney thick ascending limbs and collecting ducts (at protein level).

It is found in the nucleus. It localises to the cytoplasm. Functionally, transcriptional regulator. Recognizes and binds to the DNA sequence 5'-GCG(T/G)GGGCG-3'(EGR-site) in the promoter region of target genes. Binds double-stranded target DNA, irrespective of the cytosine methylation status. Regulates the transcription of numerous target genes, and thereby plays an important role in regulating the response to growth factors, DNA damage, and ischemia. Plays a role in the regulation of cell survival, proliferation and cell death. Activates expression of p53/TP53 and TGFB1, and thereby helps prevent tumor formation. Required for normal progress through mitosis and normal proliferation of hepatocytes after partial hepatectomy. Mediates responses to ischemia and hypoxia; regulates the expression of proteins such as IL1B and CXCL2 that are involved in inflammatory processes and development of tissue damage after ischemia. Regulates biosynthesis of luteinizing hormone (LHB) in the pituitary. Regulates the amplitude of the expression rhythms of clock genes: BMAL1, PER2 and NR1D1 in the liver via the activation of PER1 (clock repressor) transcription. Regulates the rhythmic expression of core-clock gene BMAL1 in the suprachiasmatic nucleus (SCN). Regulates biosynthesis of glucocorticoid receptor GR/NR3C1 in the hippocampus and thereby may play a role in the behavioral and hypothalamic-pituitary-adrenal responses to stress in offspring. The sequence is that of Early growth response protein 1 (Egr1) from Rattus norvegicus (Rat).